We begin with the raw amino-acid sequence, 239 residues long: Ribonuclease PH (239 aa).

Residues arginine 86 and 124-126 (GTR) each bind phosphate.

The protein belongs to the RNase PH family. Homohexameric ring arranged as a trimer of dimers.

The catalysed reaction is tRNA(n+1) + phosphate = tRNA(n) + a ribonucleoside 5'-diphosphate. In terms of biological role, phosphorolytic 3'-5' exoribonuclease that plays an important role in tRNA 3'-end maturation. Removes nucleotide residues following the 3'-CCA terminus of tRNAs; can also add nucleotides to the ends of RNA molecules by using nucleoside diphosphates as substrates, but this may not be physiologically important. Probably plays a role in initiation of 16S rRNA degradation (leading to ribosome degradation) during starvation. The chain is Ribonuclease PH from Rickettsia bellii (strain RML369-C).